The primary structure comprises 526 residues: uncharacterized protein (526 aa).

WD repeat units follow at residues 210-248 (SMEQ…HHDT) and 452-491 (SHNS…LIDS).

This is an uncharacterized protein from Acanthamoeba polyphaga mimivirus (APMV).